Consider the following 238-residue polypeptide: Probable RNA/DNA demethylase ALKBH6 (238 aa).

A Fe2OG dioxygenase domain is found at 96–227; the sequence is PANHVLVNQY…RVSLTIRRVP (132 aa). 2 residues coordinate 2-oxoglutarate: Asn103 and Tyr105. Residues His114 and Asp116 each coordinate Fe cation. Residues 138–161 form a disordered region; that stretch reads YEPRRPEDDDPTEQPRPPPRPTTS. His182 is a binding site for Fe cation. Positions 218 and 220 each coordinate 2-oxoglutarate.

The protein belongs to the alkB family. As to quaternary structure, interacts with VCPKMT. Fe(2+) serves as cofactor. As to expression, widely expressed, with highest expression in testis and pancreas.

Its subcellular location is the cytoplasm. The protein localises to the nucleus. Functionally, probable Fe(2+)/2-oxoglutarate-dependent dioxygenase involved in oxidative demethylation of nucleic acids. Binds nucleic acids with a preference for ssDNA or ssRNA to other types of DNAs. May play a role in nucleic acid damage repair. The chain is Probable RNA/DNA demethylase ALKBH6 from Homo sapiens (Human).